Consider the following 1174-residue polypeptide: Ribonucleoside-diphosphate reductase large subunit-like protein (1174 aa).

Residues 50–72 (PYVRIMNGVSGIQIGNHNAMSIA) carry the RIP homotypic interaction motif (RHIM) motif. Disordered stretches follow at residues 170-269 (ASNA…KLKP) and 291-325 (AAAAVAPESESSPAASAPPAAAAMATGGDDEDQSS). 3 stretches are compositionally biased toward low complexity: residues 182-202 (ATSGAGSAAATPAATTPAATA), 233-243 (HVSVGTQATPS), and 291-316 (AAAAVAPESESSPAASAPPAAAAMAT).

This sequence belongs to the ribonucleoside diphosphate reductase large chain family. Self-assembles into homo-oligomeric amyloid fibrils. Interacts with host RIPK1 (via RIP homotypic interaction motif); this interaction inhibits RIPK1 ubiquitination thereby preventing effective activation of host NF-kappa-B. Interacts with host RIPK3 (via RIP homotypic interaction motif); this interaction disrupts RIPK3-RIPK1 interactions characteristic of TNF-alpha induced necroptosis, thereby suppressing this death pathway. Interacts (via RIP homotypic interaction motif) with host ZBP1 (via RIP homotypic interaction motif); this interaction inhibits recruitment of RIPK1 and RIPK3 to ZBP1 and prevents ZBP1-induced NF-kappa-B activation. Post-translationally, undergoes proteolytic cleavage, generating two peptides, a N-terminal and a 116 kDa. The N-terminal peptide retains RIPK1- and RIPK3-binding activity as well as cell death suppression activity.

It localises to the virion. It is found in the host cytoplasm. Provides optimal viral replication conditions by promoting host cell survival and avoiding the host inflammatory response linked to NF-kappa-B activation. Blocks RIPK1 ubiquitination, thereby preventing NF-kappa-B activation and virally induced inflammatory response. Prevents host necroptosis by targeting RIPK3 thereby preventing the formation of necroptotic RIPK1-RIPK3 complexes. Also inhibits ZBP1-induced necroptosis. Does not have ribonucleotide reductase activity. Betaherpesviruses probably use another strategy to expand the dNTP pool in a quiescent host cell. The chain is Ribonucleoside-diphosphate reductase large subunit-like protein from Murid herpesvirus 1 (strain Smith) (MuHV-1).